The chain runs to 1006 residues: Pentatricopeptide repeat-containing protein At1g30610, chloroplastic (1006 aa).

The N-terminal 40 residues, 1–40, are a transit peptide targeting the chloroplast; sequence MAVTISTNAFVNASLLDESRNSFWRPLFHQPYYNCRRVVR. Disordered regions lie at residues 180–219 and 248–292; these read LSKS…ERGS and SSVA…IARG. Positions 194–219 are enriched in basic and acidic residues; the sequence is ESFRKRYSKQEYHRSSDTSRGIERGS. A compositionally biased stretch (polar residues) spans 254–263; it reads WSNSGESSVT. Residues 265 to 284 show a composition bias toward basic and acidic residues; it reads PKDESFRRRYSKQEHHRSSD. PPR repeat units lie at residues 468–502, 506–536, 542–572, 592–626, 627–657, 661–695, 759–789, 793–827, 840–874, and 875–909; these read TDYT…DRYK, IRII…MLLQ, DMVA…MRSP, DVVV…GQKP, SPVT…MQKS, NALA…GIVG, LVVT…MKKV, NLVT…GNHI, DTYT…GYHF, and NAKR…NRIP.

The protein belongs to the PPR family. P subfamily.

Its subcellular location is the plastid. It is found in the chloroplast. Its function is as follows. May play a role in embryogenesis. The protein is Pentatricopeptide repeat-containing protein At1g30610, chloroplastic (EMB2279) of Arabidopsis thaliana (Mouse-ear cress).